The following is a 1333-amino-acid chain: MDIDAEREKITQEIQELERILYPGSTSVHFEVSESSLSSDSEADSLPDEDLETAGAPILEEEGSSESSNDEEDPKDKALPEDPETCLQLNMVYQEVIREKLAEVSQLLAQNQEQQEEILFDLSGTKCPKVKDGRSLPSYMYIGHFLKPYFKDKVTGVGPPANEETREKATQGIKAFEQLLVTKWKHWEKALLRKSVVSDRLQRLLQPKLLKLEYLHEKQSRVSSELERQALEKQIKEAEKEIQDINQLPEEALLGNRLDSHDWEKISNINFEGARSAEEIRKFWQSSEHPSISKQEWSTEEVERLKAIAATHGHLEWHLVAEELGTSRSAFQCLQKFQQYNKTLKRKEWTEEEDHMLTQLVQEMRVGNHIPYRKIVYFMEGRDSMQLIYRWTKSLDPSLKRGFWAPEEDAKLLQAVAKYGAQDWFKIREEVPGRSDAQCRDRYIRRLHFSLKKGRWNAKEEQQLIQLIEKYGVGHWARIASELPHRSGSQCLSKWKILARKKQHLQRKRGQRPRHSSQWSSSGSSSSSSEDYGSSSGSDGSSGSENSDVELEASLEKSRALTPQQYRVPDIDLWVPTRLITSQSQREGTGCYPQHPAVSCCTQDASQNHHKEGSTTVSAAEKNQLQVPYETHSTVPRGDRFLHFSDTHSASLKDPACKSHTLMKERPKQPLLPSSRSGSDPGNNTAGPHLRQLWHGTYQNKQRRKRQALHRRLLKHRLLLAVIPWVGDINLACTQAPRRPATVQTKADSIRMQLECARLASTPVFTLLIQLLQIDTAGCMEVVRERKSQPPALLQPGTRNTQPHLLQASSNAKNNTGCLPSMTGEQTAKRASHKGRPRLGSCRTEATPFQVPVAAPRGLRPKPKTVSELLREKRLRESHAKKATQALGLNSQLLVSSPVILQPPLLPVPHGSPVVGPATSSVELSVPVAPVMVSSSPSGSWPVGGISATDKQPPNLQTISLNPPHKGTQVAAPAAFRSLALAPGQVPTGGHLSTLGQTSTTSQKQSLPKVLPILRAAPSLTQLSVQPPVSGQPLATKSSLPVNWVLTTQKLLSVQVPAVVGLPQSVMTPETIGLQAKQLPSPAKTPAFLEQPPASTDTEPKGPQGQEIPPTPGPEKAALDLSLLSQESEAAIVTWLKGCQGAFVPPLGSRMPYHPPSLCSLRALSSLLLQKQDLEQKASSLAASQAAGAQPDPKAGALQASLELVQRQFRDNPAYLLLKTRFLAIFSLPAFLATLPPNSIPTTLSPDVAVVSESDSEDLGDLELKDRARQLDCMACRVQASPAAPDPVQSHLVSPGQRAPSPGEVSAPSPLDASDGLDDLNVLRTRRARHSRR.

Residues His29–Glu84 form a disordered region. Composition is skewed to acidic residues over residues Ser41–Glu52 and Leu59–Asp73. Position 68 is a phosphoserine (Ser68). The SNAPC5-binding stretch occupies residues Glu84–Gly133. In terms of domain architecture, Myb-like 1 spans Glu250–Glu288. The region spanning His289–Thr343 is the HTH myb-type 1 domain. Residues Trp317–Asn341 constitute a DNA-binding region (H-T-H motif). A Myb-like 2 domain is found at Leu344–Leu395. 2 consecutive HTH myb-type domains span residues Asp396 to Leu451 and Lys452 to Gln503. 2 DNA-binding regions (H-T-H motif) span residues Trp424–Leu447 and Trp476–Ala499. The segment covering Gln503–His515 has biased composition (basic residues). Disordered stretches follow at residues Gln503–Ser558, Leu662–Gln702, Asn811–Cys842, and Leu1079–Ala1117. Positions Ser516–Asn546 are enriched in low complexity. Polar residues-rich tracts occupy residues Leu672–Ala686 and Asn811–Gln826. The SNAPC2-binding stretch occupies residues Ala1131–Asp1247. Phosphoserine occurs at positions 1252, 1254, 1301, and 1309. Residues Pro1282–Arg1333 are disordered. Basic residues predominate over residues Arg1324–Arg1333.

Part of the SNAPc composed of 5 subunits: SNAPC1, SNAPC2, SNAPC3, SNAPC4 and SNAPC5. SNAPC4 interacts with SNAPC1, SNAPC2, SNAPC5, BRF2 and TBP.

It localises to the nucleus. Functionally, part of the SNAPc complex required for the transcription of both RNA polymerase II and III small-nuclear RNA genes. Binds to the proximal sequence element (PSE), a non-TATA-box basal promoter element common to these 2 types of genes. Recruits TBP and BRF2 to the U6 snRNA TATA box. The protein is snRNA-activating protein complex subunit 4 of Mus musculus (Mouse).